We begin with the raw amino-acid sequence, 261 residues long: Cell division protein DivIB (261 aa).

The Cytoplasmic segment spans residues 1 to 27 (MEKGKVVVLEDRVPKLKERRRQKANRR). A helical membrane pass occupies residues 28 to 48 (LIAYLSFFFLFILCVLYFQSP). The segment at 47-117 (SPLGAVGHVE…PNTIAIHVRE (71 aa)) is alpha. Topologically, residues 49-261 (LGAVGHVEVS…KEDGDETTSP (213 aa)) are extracellular. The POTRA domain maps to 50–118 (GAVGHVEVSG…NTIAIHVREW (69 aa)). A beta region spans residues 118–230 (WRRIAYVYDR…YPAIAAALDR (113 aa)). The interval 231 to 260 (NVKGVIHLEVGSYFVPYSPPKKEDGDETTS) is gamma.

Belongs to the FtsQ/DivIB family. DivIB subfamily.

Its subcellular location is the cell membrane. Functionally, cell division protein that may be involved in stabilizing or promoting the assembly of the division complex. This chain is Cell division protein DivIB, found in Geobacillus kaustophilus (strain HTA426).